Reading from the N-terminus, the 293-residue chain is MNAFDTDITEHADSSGCHPLFRDVPATVEFNKLRKRLLRLTRQAIEDFAMVKPGDRWMVCLSGGKDSYGLLALLLDLKWRGLLPVELLAVNLDQGQPNFPKHILPDFLTRYGIEHRIEYQDTYSIVTDKLPETSTYCSLCSRLRRGNLYRIAREEGCSAIVLGHHREDILETFFMNLFHGGRLAAMPPKLLNDEGDLMVFRPLAYAAEDDLEKFANAMQFPIIPCDLCGSQDGLQRNAMKAMLIDIEKRMPGRKDTMIRALTNVRPSHLLDRKLFDFAGLMANGEKGSDDALW.

Positions 62–67 match the PP-loop motif motif; it reads SGGKDS. [4Fe-4S] cluster-binding residues include Cys-137, Cys-140, and Cys-228.

Belongs to the TtcA family. In terms of assembly, homodimer. Mg(2+) serves as cofactor. [4Fe-4S] cluster is required as a cofactor.

It localises to the cytoplasm. It carries out the reaction cytidine(32) in tRNA + S-sulfanyl-L-cysteinyl-[cysteine desulfurase] + AH2 + ATP = 2-thiocytidine(32) in tRNA + L-cysteinyl-[cysteine desulfurase] + A + AMP + diphosphate + H(+). The protein operates within tRNA modification. Its function is as follows. Catalyzes the ATP-dependent 2-thiolation of cytidine in position 32 of tRNA, to form 2-thiocytidine (s(2)C32). The sulfur atoms are provided by the cysteine/cysteine desulfurase (IscS) system. In Brucella suis (strain ATCC 23445 / NCTC 10510), this protein is tRNA-cytidine(32) 2-sulfurtransferase.